A 425-amino-acid polypeptide reads, in one-letter code: 3-phosphoshikimate 1-carboxyvinyltransferase (425 aa).

3-phosphoshikimate is bound by residues Lys-20, Ser-21, and Arg-25. Lys-20 lines the phosphoenolpyruvate pocket. 2 residues coordinate phosphoenolpyruvate: Gly-92 and Arg-120. 3-phosphoshikimate contacts are provided by Ser-165, Gln-167, Asp-312, and Lys-339. Gln-167 contributes to the phosphoenolpyruvate binding site. The active-site Proton acceptor is the Asp-312. Phosphoenolpyruvate is bound by residues Arg-343 and Arg-385.

Belongs to the EPSP synthase family. In terms of assembly, monomer.

Its subcellular location is the cytoplasm. It catalyses the reaction 3-phosphoshikimate + phosphoenolpyruvate = 5-O-(1-carboxyvinyl)-3-phosphoshikimate + phosphate. The protein operates within metabolic intermediate biosynthesis; chorismate biosynthesis; chorismate from D-erythrose 4-phosphate and phosphoenolpyruvate: step 6/7. In terms of biological role, catalyzes the transfer of the enolpyruvyl moiety of phosphoenolpyruvate (PEP) to the 5-hydroxyl of shikimate-3-phosphate (S3P) to produce enolpyruvyl shikimate-3-phosphate and inorganic phosphate. The chain is 3-phosphoshikimate 1-carboxyvinyltransferase from Alkaliphilus metalliredigens (strain QYMF).